A 291-amino-acid polypeptide reads, in one-letter code: Endo-1,4-beta-xylanase 11B (291 aa).

The first 19 residues, 1–19, serve as a signal peptide directing secretion; that stretch reads MVAFSSLFLGASIAATALA. Residues 34–222 form the GH11 domain; the sequence is TYTQSATGTH…SSGSARINVG (189 aa). Asn-93 is a glycosylation site (N-linked (GlcNAc...) asparagine). Glu-118 acts as the Nucleophile in catalysis. The active-site Proton donor is the Glu-209. The interval 223-246 is disordered; sequence GGSTGGGNNGGGNNGGNPGGNPGG. The CBM1 domain occupies 255–291; sequence NCSPRWGQCGGQGWNGPTCCESGTTCRQQNQWYSQCL.

It belongs to the glycosyl hydrolase 11 (cellulase G) family.

The protein resides in the secreted. It catalyses the reaction Endohydrolysis of (1-&gt;4)-beta-D-xylosidic linkages in xylans.. It functions in the pathway glycan degradation; xylan degradation. With respect to regulation, the activity iss completely inhibited by Hg(2+), a metal ion that interacts with Trp and oxidizes the indole ring, and is significantly enhanced by beta-mercaptoethanol, which counteracts the oxidation effects of the S-S linkage between Cys residues. In terms of biological role, endo-1,4-beta-xylanase involved in the hydrolysis of xylan, a major structural heterogeneous polysaccharide found in plant biomass representing the second most abundant polysaccharide in the biosphere, after cellulose. Shows maximum activity on soluble wheat arabinoxylan (defined as 100%), moderate activity on birchwood xylan (80.5%) and beechwood xylan (76.2%), and weak activity on insoluble wheat arabinoxylan (7.0%). Has no activity towards glucan or carboxymethyl cellulose-sodium (CMC-Na). In Humicola insolens (Soft-rot fungus), this protein is Endo-1,4-beta-xylanase 11B.